Consider the following 438-residue polypeptide: 23S rRNA (uracil(1939)-C(5))-methyltransferase RlmD (438 aa).

The region spanning 10-68 (RVTTRQTITVKVHDLDSFGQGVAHHNGKALFVQGALPDEVAEVSIIEDKRHFSRGVATR) is the TRAM domain. Residues C81, C87, C90, and C168 each contribute to the [4Fe-4S] cluster site. Q271, F300, N305, E321, N348, and D369 together coordinate S-adenosyl-L-methionine. The active-site Nucleophile is the C395.

It belongs to the class I-like SAM-binding methyltransferase superfamily. RNA M5U methyltransferase family. RlmD subfamily.

The catalysed reaction is uridine(1939) in 23S rRNA + S-adenosyl-L-methionine = 5-methyluridine(1939) in 23S rRNA + S-adenosyl-L-homocysteine + H(+). Its function is as follows. Catalyzes the formation of 5-methyl-uridine at position 1939 (m5U1939) in 23S rRNA. The polypeptide is 23S rRNA (uracil(1939)-C(5))-methyltransferase RlmD (Erwinia tasmaniensis (strain DSM 17950 / CFBP 7177 / CIP 109463 / NCPPB 4357 / Et1/99)).